Here is a 336-residue protein sequence, read N- to C-terminus: Glutamyl endopeptidase (336 aa).

A signal peptide spans 1 to 29; that stretch reads MKGKFLKVSSLFVATLTTATLVSSPAANA. A propeptide spanning residues 30-68 is cleaved from the precursor; that stretch reads LSSKAMDNHPQQTQSSKQQTPKIQKGGNLKPLEQREHAN. The tract at residues 34–61 is disordered; the sequence is AMDNHPQQTQSSKQQTPKIQKGGNLKPL. The span at 39–51 shows a compositional bias: low complexity; it reads PQQTQSSKQQTPK. Residues His119, Asp161, and Ser237 each act as charge relay system in the active site. A disordered region spans residues 283–336; sequence FANDDQPNNPDNPDNPNNPDNPNNPDEPNNPDNPNNPDNPDNGDNNNSDNPDAA. Low complexity predominate over residues 286-336; it reads DDQPNNPDNPDNPNNPDNPNNPDEPNNPDNPNNPDNPDNGDNNNSDNPDAA. 11 repeat units span residues 289 to 291, 292 to 294, 295 to 297, 298 to 300, 301 to 303, 304 to 306, 310 to 312, 313 to 315, 316 to 318, 319 to 321, and 322 to 324. The 11 X 3 AA repeats of P-[DN]-N stretch occupies residues 289–324; sequence PNNPDNPDNPNNPDNPNNPDEPNNPDNPNNPDNPDN.

The protein belongs to the peptidase S1B family. Proteolytically cleaved by aureolysin (aur). This cleavage leads to the activation of SspA.

The protein resides in the secreted. The catalysed reaction is Preferential cleavage: Glu-|-Xaa, Asp-|-Xaa.. Preferentially cleaves peptide bonds on the carboxyl-terminal side of aspartate and glutamate. Along with other extracellular proteases it is involved in colonization and infection of human tissues. Required for proteolytic maturation of thiol protease SspB and inactivation of SspC, an inhibitor of SspB. It is the most important protease for degradation of fibronectin-binding protein (FnBP) and surface protein A, which are involved in adherence to host cells. May also protect bacteria against host defense mechanism by cleaving the immunoglobulin classes IgG, IgA and IgM. May be involved in the stability of secreted lipases. This Staphylococcus aureus (strain NCTC 8325 / PS 47) protein is Glutamyl endopeptidase (sspA).